The primary structure comprises 309 residues: Histone-lysine N-methyltransferase SETMAR (309 aa).

The 64-residue stretch at 74–137 folds into the Pre-SET domain; that stretch reads PGCACIETPC…RCRNRVVQNG (64 aa). Zn(2+)-binding residues include Cys76, Cys78, Cys83, Cys88, Cys90, Cys119, Cys123, Cys125, and Cys129. In terms of domain architecture, SET spans 140–264; the sequence is FLLQVFQTEK…PGEELSYDYS (125 aa). S-adenosyl-L-methionine contacts are provided by residues 150–152, Tyr193, Arg221, and 224–225; these read KGW and NH. Residues Cys227, Cys288, Cys290, and Cys295 each contribute to the Zn(2+) site. A Post-SET domain is found at 284-300; that stretch reads PRKPCYCGAQSCTTFLP.

The protein belongs to the class V-like SAM-binding methyltransferase superfamily.

It is found in the nucleus. It localises to the chromosome. The enzyme catalyses L-lysyl(36)-[histone H3] + 2 S-adenosyl-L-methionine = N(6),N(6)-dimethyl-L-lysyl(36)-[histone H3] + 2 S-adenosyl-L-homocysteine + 2 H(+). In terms of biological role, histone methyltransferase that methylates 'Lys-4' and 'Lys-36' of histone H3, 2 specific tags for epigenetic transcriptional activation. Specifically mediates dimethylation of H3 'Lys-36'. The polypeptide is Histone-lysine N-methyltransferase SETMAR (Mus musculus (Mouse)).